The primary structure comprises 524 residues: Chromosomal replication initiator protein DnaA (524 aa).

The interval 1 to 73 (MELPESAWEQ…DELLSSADHH (73 aa)) is domain I, interacts with DnaA modulators. The tract at residues 73–187 (HPITSVEISV…DVEGGLQHKS (115 aa)) is domain II. Polar residues-rich tracts occupy residues 86–95 (RSTSFETNQG), 106–126 (APRQ…QPQQ), and 153–165 (NGYN…QPYN). The disordered stretch occupies residues 86–173 (RSTSFETNQG…YNDNPMGQGK (88 aa)). The tract at residues 188-404 (NLNPTFIFDN…GALKRVIANA (217 aa)) is domain III, AAA+ region. Positions 232, 234, 235, and 236 each coordinate ATP. The tract at residues 405 to 524 (HFTGRDISVE…VKNLLRTLTT (120 aa)) is domain IV, binds dsDNA.

The protein belongs to the DnaA family. As to quaternary structure, oligomerizes as a right-handed, spiral filament on DNA at oriC.

It localises to the cytoplasm. Its function is as follows. Plays an essential role in the initiation and regulation of chromosomal replication. ATP-DnaA binds to the origin of replication (oriC) to initiate formation of the DNA replication initiation complex once per cell cycle. Binds the DnaA box (a 9 base pair repeat at the origin) and separates the double-stranded (ds)DNA. Forms a right-handed helical filament on oriC DNA; dsDNA binds to the exterior of the filament while single-stranded (ss)DNA is stabiized in the filament's interior. The ATP-DnaA-oriC complex binds and stabilizes one strand of the AT-rich DNA unwinding element (DUE), permitting loading of DNA polymerase. After initiation quickly degrades to an ADP-DnaA complex that is not apt for DNA replication. Binds acidic phospholipids. This Saccharophagus degradans (strain 2-40 / ATCC 43961 / DSM 17024) protein is Chromosomal replication initiator protein DnaA.